Reading from the N-terminus, the 103-residue chain is Small ribosomal subunit protein uS10 (103 aa).

It belongs to the universal ribosomal protein uS10 family. In terms of assembly, part of the 30S ribosomal subunit.

In terms of biological role, involved in the binding of tRNA to the ribosomes. The sequence is that of Small ribosomal subunit protein uS10 from Campylobacter fetus subsp. fetus (strain 82-40).